We begin with the raw amino-acid sequence, 412 residues long: Imidazolonepropionase (412 aa).

Fe(3+) contacts are provided by His71 and His73. Zn(2+) contacts are provided by His71 and His73. Arg80, Tyr143, and His176 together coordinate 4-imidazolone-5-propanoate. Residue Tyr143 coordinates N-formimidoyl-L-glutamate. His241 is a binding site for Fe(3+). Position 241 (His241) interacts with Zn(2+). Gln244 provides a ligand contact to 4-imidazolone-5-propanoate. Asp316 lines the Fe(3+) pocket. Asp316 is a Zn(2+) binding site. N-formimidoyl-L-glutamate contacts are provided by Asn318 and Gly320. Position 321 (Thr321) interacts with 4-imidazolone-5-propanoate.

It belongs to the metallo-dependent hydrolases superfamily. HutI family. It depends on Zn(2+) as a cofactor. The cofactor is Fe(3+).

It is found in the cytoplasm. The catalysed reaction is 4-imidazolone-5-propanoate + H2O = N-formimidoyl-L-glutamate. Its pathway is amino-acid degradation; L-histidine degradation into L-glutamate; N-formimidoyl-L-glutamate from L-histidine: step 3/3. Its function is as follows. Catalyzes the hydrolytic cleavage of the carbon-nitrogen bond in imidazolone-5-propanoate to yield N-formimidoyl-L-glutamate. It is the third step in the universal histidine degradation pathway. In Aromatoleum aromaticum (strain DSM 19018 / LMG 30748 / EbN1) (Azoarcus sp. (strain EbN1)), this protein is Imidazolonepropionase.